The following is a 338-amino-acid chain: GTPase Obg (338 aa).

The region spanning 1–159 is the Obg domain; that stretch reads MKFVDSASVF…FTLDLELKLM (159 aa). Positions 123 to 145 are disordered; that stretch reads GGRGNQHFATSTHQAPRHAEPGQ. The OBG-type G domain maps to 160–323; that stretch reads ADVGLVGFPN…LKDALWRIIV (164 aa). Residues 166–173, 191–195, 213–216, 280–283, and 304–306 contribute to the GTP site; these read GFPNAGKS, FTTLV, DIPG, TKMD, and SAV. Mg(2+) is bound by residues Ser173 and Thr193.

This sequence belongs to the TRAFAC class OBG-HflX-like GTPase superfamily. OBG GTPase family. In terms of assembly, monomer. Requires Mg(2+) as cofactor.

The protein resides in the cytoplasm. An essential GTPase which binds GTP, GDP and possibly (p)ppGpp with moderate affinity, with high nucleotide exchange rates and a fairly low GTP hydrolysis rate. Plays a role in control of the cell cycle, stress response, ribosome biogenesis and in those bacteria that undergo differentiation, in morphogenesis control. The protein is GTPase Obg of Chlorobium chlorochromatii (strain CaD3).